A 228-amino-acid polypeptide reads, in one-letter code: Probable septum site-determining protein MinC (228 aa).

This sequence belongs to the MinC family. Interacts with MinD and FtsZ.

In terms of biological role, cell division inhibitor that blocks the formation of polar Z ring septums. Rapidly oscillates between the poles of the cell to destabilize FtsZ filaments that have formed before they mature into polar Z rings. Prevents FtsZ polymerization. This chain is Probable septum site-determining protein MinC, found in Pectobacterium atrosepticum (strain SCRI 1043 / ATCC BAA-672) (Erwinia carotovora subsp. atroseptica).